A 91-amino-acid chain; its full sequence is Small ribosomal subunit protein uS19 (91 aa).

Belongs to the universal ribosomal protein uS19 family.

In terms of biological role, protein S19 forms a complex with S13 that binds strongly to the 16S ribosomal RNA. The protein is Small ribosomal subunit protein uS19 of Verminephrobacter eiseniae (strain EF01-2).